We begin with the raw amino-acid sequence, 357 residues long: Phospho-N-acetylmuramoyl-pentapeptide-transferase (357 aa).

10 helical membrane-spanning segments follow: residues 23–43, 70–90, 91–111, 127–147, 171–191, 196–216, 236–256, 260–280, 286–306, and 334–354; these read AIFSLLTSFFINLYIGPYFIY, TMGGIFIIFSILFSTILYCNL, SNIYIWYVISILIGYGLIGFI, LKWKYFFLSIIAFIFICMIKI, YLYIFLSYFVLVGTSNAVNLT, GLAIMPVIFLTCGLTLISLFS, LAILCMAIVGSGLGFLWFNSY, VFMGDVGSLALGGSLGAIAIL, LLIIMGGIFVFETISVILQII, and LIIVRFWIVSLILLLISLISL.

The protein belongs to the glycosyltransferase 4 family. MraY subfamily. Mg(2+) serves as cofactor.

It is found in the cell inner membrane. The catalysed reaction is UDP-N-acetyl-alpha-D-muramoyl-L-alanyl-gamma-D-glutamyl-meso-2,6-diaminopimeloyl-D-alanyl-D-alanine + di-trans,octa-cis-undecaprenyl phosphate = di-trans,octa-cis-undecaprenyl diphospho-N-acetyl-alpha-D-muramoyl-L-alanyl-D-glutamyl-meso-2,6-diaminopimeloyl-D-alanyl-D-alanine + UMP. It functions in the pathway cell wall biogenesis; peptidoglycan biosynthesis. Catalyzes the initial step of the lipid cycle reactions in the biosynthesis of the cell wall peptidoglycan: transfers peptidoglycan precursor phospho-MurNAc-pentapeptide from UDP-MurNAc-pentapeptide onto the lipid carrier undecaprenyl phosphate, yielding undecaprenyl-pyrophosphoryl-MurNAc-pentapeptide, known as lipid I. The sequence is that of Phospho-N-acetylmuramoyl-pentapeptide-transferase from Buchnera aphidicola subsp. Acyrthosiphon pisum (strain 5A).